Here is a 302-residue protein sequence, read N- to C-terminus: Large ribosomal subunit protein uL18 (302 aa).

The protein belongs to the universal ribosomal protein uL18 family. Component of the large ribosomal subunit (LSU).

The protein localises to the cytoplasm. It is found in the nucleus. Component of the ribosome, a large ribonucleoprotein complex responsible for the synthesis of proteins in the cell. The small ribosomal subunit (SSU) binds messenger RNAs (mRNAs) and translates the encoded message by selecting cognate aminoacyl-transfer RNA (tRNA) molecules. The large subunit (LSU) contains the ribosomal catalytic site termed the peptidyl transferase center (PTC), which catalyzes the formation of peptide bonds, thereby polymerizing the amino acids delivered by tRNAs into a polypeptide chain. The nascent polypeptides leave the ribosome through a tunnel in the LSU and interact with protein factors that function in enzymatic processing, targeting, and the membrane insertion of nascent chains at the exit of the ribosomal tunnel. This Cucumis sativus (Cucumber) protein is Large ribosomal subunit protein uL18 (RPL5).